Here is a 212-residue protein sequence, read N- to C-terminus: Probable 2-dehydro-3-deoxy-6-phosphogalactonate aldolase (212 aa).

Arginine 18 contributes to the 2-dehydro-3-deoxy-6-phospho-D-galactonate binding site. Glutamate 41 serves as the catalytic Proton donor/acceptor. Residues threonine 70, lysine 130, glycine 160, glycine 180, and serine 181 each contribute to the 2-dehydro-3-deoxy-6-phospho-D-galactonate site. The active-site Schiff-base intermediate with substrate is the lysine 130.

This sequence belongs to the KHG/KDPG aldolase family. In terms of assembly, homotrimer.

The enzyme catalyses 2-dehydro-3-deoxy-6-phospho-D-galactonate = D-glyceraldehyde 3-phosphate + pyruvate. It participates in carbohydrate acid metabolism; D-galactonate degradation; D-glyceraldehyde 3-phosphate and pyruvate from D-galactonate: step 3/3. Functionally, involved in the degradation of galactose via the DeLey-Doudoroff pathway. Catalyzes the reversible, stereospecific retro-aldol cleavage of 2-keto-3-deoxy-6-phosphogalactonate (KDPGal) to pyruvate and D-glyceraldehyde-3-phosphate. This Rhizobium meliloti (strain 1021) (Ensifer meliloti) protein is Probable 2-dehydro-3-deoxy-6-phosphogalactonate aldolase (dgoA).